The sequence spans 239 residues: Ankyrin repeat domain-containing protein 49 (239 aa).

S49 is modified (phosphoserine). ANK repeat units follow at residues 73–103 (DPSR…HVNT), 107–136 (DEYT…DVHA), 140–169 (DGWT…DINA), and 173–206 (GLLT…GLKN).

Widely expressed in fetus, at a high level in fetal liver, brain and lung.

It localises to the nucleus. Its function is as follows. Induces HBG1 expression. May have a role in spermatogenesis where it promotes autophagy in response to serum starvation, via the NF-kappaB pathway. In Homo sapiens (Human), this protein is Ankyrin repeat domain-containing protein 49 (ANKRD49).